A 244-amino-acid chain; its full sequence is MGGKLSKKKKGYSVNDEKAKDKDKKAEGAATEEEETPKEAEDAQQTTETTEVKENNKEEKVEKDAQVSANKTEEKEGEKEKTVTQEEAQKAEPEKSEAVVDAKVEPQKNNEQAPKQEEPAAASAPAASSEAPKTSEPSSDAKASQPSEATAPSKADDKSKEEGEAKKTEAPATPAAQETKSEVAPASDSKPSSSEAAPSSKETVAATAAPSSTAKASDPSAPPEEAKPSEAPATNSDQTIAVQD.

A compositionally biased stretch (basic residues) spans 1–11 (MGGKLSKKKKG). A disordered region spans residues 1 to 244 (MGGKLSKKKK…NSDQTIAVQD (244 aa)). The N-myristoyl glycine moiety is linked to residue Gly-2. Ser-6 bears the Phosphoserine; by PKC mark. Composition is skewed to basic and acidic residues over residues 15–27 (NDEK…KKAE) and 50–118 (TEVK…KQEE). Residues 119–138 (PAAASAPAASSEAPKTSEPS) show a composition bias toward low complexity. A compositionally biased stretch (polar residues) spans 141 to 150 (AKASQPSEAT). Basic and acidic residues predominate over residues 154 to 169 (KADDKSKEEGEAKKTE). The span at 170–219 (APATPAAQETKSEVAPASDSKPSSSEAAPSSKETVAATAAPSSTAKASDP) shows a compositional bias: low complexity. Residues 234–244 (TNSDQTIAVQD) show a composition bias toward polar residues.

The protein belongs to the BASP1 family. Developing tissues.

The protein localises to the cytoplasm. Its subcellular location is the cytoskeleton. Functionally, may play a specific role in the development of tissues. This is Brain acid soluble protein 1 homolog (BASP1) from Gallus gallus (Chicken).